Reading from the N-terminus, the 425-residue chain is UDP-N-acetylglucosamine 1-carboxyvinyltransferase (425 aa).

22–23 serves as a coordination point for phosphoenolpyruvate; the sequence is KN. R98 lines the UDP-N-acetyl-alpha-D-glucosamine pocket. Residue C122 is the Proton donor of the active site. The residue at position 122 (C122) is a 2-(S-cysteinyl)pyruvic acid O-phosphothioketal. UDP-N-acetyl-alpha-D-glucosamine contacts are provided by residues 127–131, D313, and I335; that span reads RPVDQ.

This sequence belongs to the EPSP synthase family. MurA subfamily.

It localises to the cytoplasm. It catalyses the reaction phosphoenolpyruvate + UDP-N-acetyl-alpha-D-glucosamine = UDP-N-acetyl-3-O-(1-carboxyvinyl)-alpha-D-glucosamine + phosphate. It functions in the pathway cell wall biogenesis; peptidoglycan biosynthesis. In terms of biological role, cell wall formation. Adds enolpyruvyl to UDP-N-acetylglucosamine. This Xylella fastidiosa (strain 9a5c) protein is UDP-N-acetylglucosamine 1-carboxyvinyltransferase.